The following is a 348-amino-acid chain: Inosamine-phosphate amidinotransferase 1 (348 aa).

Catalysis depends on residues Asp-179 and His-227. Cys-332 serves as the catalytic Amidino-cysteine intermediate.

This sequence belongs to the amidinotransferase family. As to quaternary structure, homodimer.

It carries out the reaction 1-amino-1-deoxy-scyllo-inositol 4-phosphate + L-arginine = 1-guanidino-1-deoxy-scyllo-inositol 4-phosphate + L-ornithine. Its pathway is antibiotic biosynthesis; streptomycin biosynthesis. Catalyzes two non-consecutive transamidination reactions. It converts scyllo-inosamine 4-phosphate into N-amidino-scyllo-inosamine 4-phosphate and N1-amidinostreptamine 6-phosphate into streptidine 6-phosphate. This Streptomyces glaucescens protein is Inosamine-phosphate amidinotransferase 1 (strB1).